The chain runs to 234 residues: DNA repair protein RecO (234 aa).

Belongs to the RecO family.

Its function is as follows. Involved in DNA repair and RecF pathway recombination. This chain is DNA repair protein RecO, found in Halorhodospira halophila (strain DSM 244 / SL1) (Ectothiorhodospira halophila (strain DSM 244 / SL1)).